Consider the following 298-residue polypeptide: Arginase (298 aa).

4 residues coordinate Mn(2+): H98, D121, H123, and D125. Substrate is bound by residues 123–127 (HGDLN), 134–136 (SGN), and D177. D225 and D227 together coordinate Mn(2+). Residues T239 and E270 each contribute to the substrate site.

This sequence belongs to the arginase family. Mn(2+) is required as a cofactor.

It catalyses the reaction L-arginine + H2O = urea + L-ornithine. The protein operates within nitrogen metabolism; urea cycle; L-ornithine and urea from L-arginine: step 1/1. The sequence is that of Arginase (rocF) from Brevibacillus brevis (Bacillus brevis).